Consider the following 310-residue polypeptide: Probable mitochondrial import receptor subunit TOM40-2 (310 aa).

Residue methionine 1 is modified to N-acetylmethionine.

It belongs to the Tom40 family. Forms part of the preprotein translocase complex of the outer mitochondrial membrane (TOM complex) which consists of at least 6 different proteins (TOM5, TOM6, TOM7, TOM20, TOM22/TOM9 and TOM40). Present in a large lipid-enriched complex called mitochondrial transmembrane lipoprotein (MTL) complex made of proteins located in the two mitochondrial membranes, including the TOM complex and the core components of the MICOS complex and containing at least digalactosyldiacylglycerol (DGDG). Binds to MIC60. Component of a mitochondrial large protein complex that contains, at least, MIC60, DGS1, TOM40, TOM20 proteins, and petC/RISP. Expressed in roots, flowers, young cotyledons and leaves.

It is found in the mitochondrion outer membrane. Central component of the receptor complex responsible for the recognition and translocation of cytosolically synthesized mitochondrial preproteins. Together with TOM22 functions as the transit peptide receptor at the surface of the mitochondrion outer membrane and facilitates the movement of preproteins into the translocation pore. Directly involved in the pore formation. The protein is Probable mitochondrial import receptor subunit TOM40-2 of Arabidopsis thaliana (Mouse-ear cress).